The chain runs to 540 residues: MRIEYVDSFYSQPFPGTYMRDFGQVKHFFEYNPHQLQEYKTRCEHELALPKEHLVALAENLKDFNQGLGCGEKTLHNIELLDQGKALTVVTGQQPGILTGPLYTIYKAMGTIGLAEKLSKELNRKVIPVFWIGADDHDHEEINHIFIPTAKGPKRITLAGKPAGRISVGNIPIPDIALLLEELEDLLPPIGWKNQGIELIKRTAHEAANLAEWFGKLMTFLFKDYGLVFINPVLPQVRAITASLFYKVVTTAPAVNQLLQASCQQMLGCGYTPQVQGEKDKLHLFWYNEHGYREALYYKKGLISNKDGTRTWTKGQLGELCLTNPAKFSPDVVMRPVVQEKLLPVLAYVAGPGEISYYALLKRIFHYFAMKMPVIYPRPNITVIEPLIKRLITKYQVPLSCLTYGLEEFIENYLQQEDQLGIETVFNELRGTLKEKQGEVVKKLSILDPDIEGMGKENLKRLIRVVNSFEEKVKQRHRKNNQVAIQQLQKIQHMTQPMGQWQERVYNIFPYVMKYGPGIIKEMYHLIEISDWRQKIIFFD.

The stretch at 455-491 (GKENLKRLIRVVNSFEEKVKQRHRKNNQVAIQQLQKI) forms a coiled coil.

The protein belongs to the BshC family.

In terms of biological role, involved in bacillithiol (BSH) biosynthesis. May catalyze the last step of the pathway, the addition of cysteine to glucosamine malate (GlcN-Mal) to generate BSH. The protein is Putative cysteine ligase BshC of Desulforamulus reducens (strain ATCC BAA-1160 / DSM 100696 / MI-1) (Desulfotomaculum reducens).